Reading from the N-terminus, the 179-residue chain is tRNA (cytidine(56)-2'-O)-methyltransferase (179 aa).

Leu-84 is a binding site for S-adenosyl-L-methionine.

Belongs to the aTrm56 family. In terms of assembly, homodimer.

It is found in the cytoplasm. The catalysed reaction is cytidine(56) in tRNA + S-adenosyl-L-methionine = 2'-O-methylcytidine(56) in tRNA + S-adenosyl-L-homocysteine + H(+). Functionally, specifically catalyzes the AdoMet-dependent 2'-O-ribose methylation of cytidine at position 56 in tRNAs. This is tRNA (cytidine(56)-2'-O)-methyltransferase from Methanothermobacter thermautotrophicus (strain ATCC 29096 / DSM 1053 / JCM 10044 / NBRC 100330 / Delta H) (Methanobacterium thermoautotrophicum).